A 152-amino-acid polypeptide reads, in one-letter code: Antiholin-like protein LrgA (152 aa).

4 helical membrane passes run Tyr23–Glu43, Phe45–Cys65, Val77–Ile97, and Ile108–Ala128.

The protein belongs to the CidA/LrgA family. LrgA subfamily.

The protein localises to the cell membrane. Inhibits the expression or activity of extracellular murein hydrolases by interacting, possibly with LrgB, with the holin-like proteins CidA and/or CidB. The LrgAB and CidAB proteins may affect the proton motive force of the membrane. May be involved in programmed cell death (PCD), possibly triggering PCD in response to antibiotics and environmental stresses. The protein is Antiholin-like protein LrgA of Staphylococcus epidermidis (strain ATCC 35984 / DSM 28319 / BCRC 17069 / CCUG 31568 / BM 3577 / RP62A).